Consider the following 385-residue polypeptide: Homoserine O-succinyltransferase (385 aa).

Positions 45-355 (NAVLVCHALN…SHGHDAFLLD (311 aa)) constitute an AB hydrolase-1 domain. S151 (nucleophile) is an active-site residue. R221 lines the substrate pocket. Catalysis depends on residues D316 and H349. Residue D350 coordinates substrate.

It belongs to the AB hydrolase superfamily. MetX family. Homodimer.

The protein localises to the cytoplasm. It catalyses the reaction L-homoserine + succinyl-CoA = O-succinyl-L-homoserine + CoA. It participates in amino-acid biosynthesis; L-methionine biosynthesis via de novo pathway; O-succinyl-L-homoserine from L-homoserine: step 1/1. In terms of biological role, transfers a succinyl group from succinyl-CoA to L-homoserine, forming succinyl-L-homoserine. In Herminiimonas arsenicoxydans, this protein is Homoserine O-succinyltransferase.